A 124-amino-acid polypeptide reads, in one-letter code: MaFF-interacting protein (124 aa).

A coiled-coil region spans residues 54-96 (LVSEVEELYKSITALREKLLQAEQSLRNLKDIHMSLEKDVTAM).

This sequence belongs to the tektin family. Interacts with MIS18A. Interacts (via its coiled-coil region) with MAFF. Strongly expressed in brain, kidney and ovary. Moderately expressed in liver, spleen, thymus, prostate, testis, small intestine and colon. Weakly expressed in heart, placenta, lung and leukocytes.

It localises to the cytoplasm. The protein resides in the nucleus. The protein localises to the nucleolus. In terms of biological role, acts as a coactivator of MAFF transcriptional activity. Inhibits cell growth and colony-forming efficiency. The polypeptide is MaFF-interacting protein (MAFIP) (Homo sapiens (Human)).